A 456-amino-acid polypeptide reads, in one-letter code: Cyclic AMP-responsive element-binding protein 3-like protein 3 (456 aa).

Disordered stretches follow at residues 1–20 and 47–120; these read MDGD…MGPI and GHGE…KGPC. Topologically, residues 1–317 are cytoplasmic; that stretch reads MDGDLAIGKM…STSKSAQTGT (317 aa). A compositionally biased stretch (polar residues) spans 71–85; sequence DSDSPTWSPAASDSG. The 64-residue stretch at 238 to 301 folds into the bZIP domain; that stretch reads MLKKIRRKIR…LSLLEQLKKL (64 aa). The interval 240-269 is basic motif; it reads KKIRRKIRNKQSAQESRKKKKEYIDGLETR. The segment at 280–301 is leucine-zipper; sequence LQRKVLHLEKQNLSLLEQLKKL. Lys289 participates in a covalent cross-link: Glycyl lysine isopeptide (Lys-Gly) (interchain with G-Cter in ubiquitin). Residues 318–338 traverse the membrane as a helical; Signal-anchor for type II membrane protein segment; sequence CIAVLLFSFALIVLPSISPFA. Over 339–456 the chain is Lumenal; it reads SNRAESPGDF…VGLEAAGGEL (118 aa). Disordered regions lie at residues 365–423 and 435–456; these read RVAP…QGNS and CAPP…GGEL. N-linked (GlcNAc...) asparagine glycans are attached at residues Asn408 and Asn415.

It belongs to the bZIP family. ATF subfamily. In terms of assembly, binds DNA as a dimer. May form homodimers. Interacts with ATF6. Interacts with SYNV1/HRD1; this interaction leads to CREB3L3 ubiquitination and proteasomal degradation. Post-translationally, controlled by regulated intramembrane proteolysis (RIP). Following ER stress a fragment containing the cytoplasmic transcription factor domain is released by proteolysis. The cleavage seems to be performed sequentially by site-1 and site-2 proteases (PS1 and PS2). In terms of processing, N-glycosylation is required for optimal proteolytic activation. Ubiquitinated at Lys-289 by SYNV1/HRD1 via 'Lys-27'-linked ubiquitin.

Its subcellular location is the endoplasmic reticulum membrane. It is found in the nucleus. In terms of biological role, transcription factor that may act during endoplasmic reticulum stress by activating unfolded protein response target genes. Activated in response to cAMP stimulation. In vitro, binds the cAMP response element (CRE). Activates transcription through box-B element and CRE. Seems to function synergistically with ATF6. In acute inflammatory response, may activate expression of acute phase response (APR) genes. May be involved in growth suppression. Regulates FGF21 transcription. Plays a crucial role in the regulation of triglyceride metabolism and is required for the maintenance of normal plasma triglyceride concentrations. The chain is Cyclic AMP-responsive element-binding protein 3-like protein 3 (CREB3L3) from Bos taurus (Bovine).